The sequence spans 92 residues: RNA-binding protein Hfq (92 aa).

The region spanning Asp-11–Val-71 is the Sm domain.

It belongs to the Hfq family. In terms of assembly, homohexamer.

Functionally, RNA chaperone that binds small regulatory RNA (sRNAs) and mRNAs to facilitate mRNA translational regulation in response to envelope stress, environmental stress and changes in metabolite concentrations. Also binds with high specificity to tRNAs. The sequence is that of RNA-binding protein Hfq from Thermotoga maritima (strain ATCC 43589 / DSM 3109 / JCM 10099 / NBRC 100826 / MSB8).